The sequence spans 205 residues: Guanylate kinase (205 aa).

The region spanning 5–183 (GTLYTVSAPS…ALTEFRSIVV (179 aa)) is the Guanylate kinase-like domain. Residue 12–19 (APSGAGKT) participates in ATP binding.

Belongs to the guanylate kinase family.

It localises to the cytoplasm. The catalysed reaction is GMP + ATP = GDP + ADP. Its function is as follows. Essential for recycling GMP and indirectly, cGMP. The chain is Guanylate kinase from Saccharophagus degradans (strain 2-40 / ATCC 43961 / DSM 17024).